Here is a 126-residue protein sequence, read N- to C-terminus: Aspartate 1-decarboxylase (126 aa).

The active-site Schiff-base intermediate with substrate; via pyruvic acid is Ser-25. A Pyruvic acid (Ser) modification is found at Ser-25. Position 57 (Thr-57) interacts with substrate. Tyr-58 acts as the Proton donor in catalysis. Residue 73–75 (GAA) coordinates substrate.

Belongs to the PanD family. In terms of assembly, heterooctamer of four alpha and four beta subunits. The cofactor is pyruvate. In terms of processing, is synthesized initially as an inactive proenzyme, which is activated by self-cleavage at a specific serine bond to produce a beta-subunit with a hydroxyl group at its C-terminus and an alpha-subunit with a pyruvoyl group at its N-terminus.

The protein localises to the cytoplasm. The enzyme catalyses L-aspartate + H(+) = beta-alanine + CO2. Its pathway is cofactor biosynthesis; (R)-pantothenate biosynthesis; beta-alanine from L-aspartate: step 1/1. Its function is as follows. Catalyzes the pyruvoyl-dependent decarboxylation of aspartate to produce beta-alanine. In Alcanivorax borkumensis (strain ATCC 700651 / DSM 11573 / NCIMB 13689 / SK2), this protein is Aspartate 1-decarboxylase.